Consider the following 493-residue polypeptide: Glycerol kinase (493 aa).

Residue T12 participates in ADP binding. 3 residues coordinate ATP: T12, T13, and S14. T12 is a sn-glycerol 3-phosphate binding site. R16 serves as a coordination point for ADP. R82, E83, Y132, and D239 together coordinate sn-glycerol 3-phosphate. R82, E83, Y132, D239, and Q240 together coordinate glycerol. ADP is bound by residues T261 and G303. ATP-binding residues include T261, G303, Q307, and G402. ADP is bound by residues G402 and N406.

Belongs to the FGGY kinase family.

The enzyme catalyses glycerol + ATP = sn-glycerol 3-phosphate + ADP + H(+). The protein operates within polyol metabolism; glycerol degradation via glycerol kinase pathway; sn-glycerol 3-phosphate from glycerol: step 1/1. Functionally, key enzyme in the regulation of glycerol uptake and metabolism. Catalyzes the phosphorylation of glycerol to yield sn-glycerol 3-phosphate. This Thermococcus gammatolerans (strain DSM 15229 / JCM 11827 / EJ3) protein is Glycerol kinase.